A 121-amino-acid chain; its full sequence is Somatostatin-1 (121 aa).

The N-terminal stretch at 1–24 (MKMVSSSRLRCLLVLLLSLTASIS) is a signal peptide. Positions 25 to 105 (CSFAGQRDSK…SGGPLLAPRE (81 aa)) are excised as a propeptide. A disordered region spans residues 76-99 (NFPLAEGGPEDAHADLERAASGGP). Cysteines 110 and 121 form a disulfide.

This sequence belongs to the somatostatin family.

It is found in the secreted. In terms of biological role, somatostatin inhibits the release of somatotropin. The chain is Somatostatin-1 (sst1) from Lophius americanus (American angler).